The chain runs to 368 residues: MKEPLDLSKYSVRTDLAVEAHQMLQERQEEQQQGIQGVIVKEREEEGIIITKVTIDEVASESMGKKPGNYLTLEVQGIRQQDTELQQKVERIFAKEFSYFLEEVGVTKEASCLIVGLGNWNVTPDALGPIVVENVLVTRHLFQLQPESVEEGFRPVSAIRPGVMGITGIETSDVIYGIIEKTKPDFVIAIDALAARSIERVNSTIQISDTGIHPGSGVGNKRKELSKETLGIPVIAIGVPTVVDAVSITSDTIDFILKHFGREMKEGNKPSRSLLPAGFTFGEKKKLTEEDMPDEKSRNMFLGAVGTLEDEEKRKLIYEVLSPLGHNLMVTPKEVDAFIEDMANVIASGLNAALHHQIDQDNTGAYTH.

Residues 1-15 (MKEPLDLSKYSVRTD) constitute a propeptide that is removed on maturation.

This sequence belongs to the peptidase A25 family. As to quaternary structure, homotetramer. Post-translationally, autoproteolytically processed. The inactive tetrameric zymogen termed p46 autoprocesses to a smaller form termed p41, which is active only during spore germination.

It catalyses the reaction Endopeptidase action with P4 Glu or Asp, P1 preferably Glu &gt; Asp, P1' hydrophobic and P2' Ala.. In terms of biological role, initiates the rapid degradation of small, acid-soluble proteins during spore germination. This Bacillus anthracis (strain A0248) protein is Germination protease.